Here is a 246-residue protein sequence, read N- to C-terminus: uncharacterized protein (246 aa).

This is an uncharacterized protein from Thermotoga maritima (strain ATCC 43589 / DSM 3109 / JCM 10099 / NBRC 100826 / MSB8).